The primary structure comprises 1149 residues: ATP-dependent helicase/deoxyribonuclease subunit B (1149 aa).

Residues 1–276 enclose the UvrD-like helicase ATP-binding domain; the sequence is MAIRYIFGRA…INLDIEERKV (276 aa). 8–15 contacts ATP; sequence GRAGRGKS. The UvrD-like helicase C-terminal domain occupies 273 to 586; sequence ERKVLPKEKE…LVGSIERSKS (314 aa). C786, C1105, C1108, and C1114 together coordinate [4Fe-4S] cluster.

This sequence belongs to the helicase family. AddB/RexB type 1 subfamily. Heterodimer of AddA and AddB. Requires Mg(2+) as cofactor. [4Fe-4S] cluster serves as cofactor.

In terms of biological role, the heterodimer acts as both an ATP-dependent DNA helicase and an ATP-dependent, dual-direction single-stranded exonuclease. Recognizes the chi site generating a DNA molecule suitable for the initiation of homologous recombination. The AddB subunit has 5' -&gt; 3' nuclease activity but not helicase activity. This chain is ATP-dependent helicase/deoxyribonuclease subunit B, found in Alkaliphilus metalliredigens (strain QYMF).